Consider the following 785-residue polypeptide: DNA ligase (785 aa).

NAD(+)-binding positions include 32–36 (DAEYD), 81–82 (SL), and Glu-121. Residue Lys-123 is the N6-AMP-lysine intermediate of the active site. The NAD(+) site is built by Arg-144, Glu-181, Lys-297, and Lys-321. Zn(2+) is bound by residues Cys-415, Cys-418, Cys-445, and Cys-451. Residues 702–785 (VEGLPLAGET…AFLKGHGISA (84 aa)) enclose the BRCT domain.

The protein belongs to the NAD-dependent DNA ligase family. LigA subfamily. Requires Mg(2+) as cofactor. The cofactor is Mn(2+).

It carries out the reaction NAD(+) + (deoxyribonucleotide)n-3'-hydroxyl + 5'-phospho-(deoxyribonucleotide)m = (deoxyribonucleotide)n+m + AMP + beta-nicotinamide D-nucleotide.. Functionally, DNA ligase that catalyzes the formation of phosphodiester linkages between 5'-phosphoryl and 3'-hydroxyl groups in double-stranded DNA using NAD as a coenzyme and as the energy source for the reaction. It is essential for DNA replication and repair of damaged DNA. The polypeptide is DNA ligase (Pseudomonas fluorescens (strain Pf0-1)).